Consider the following 390-residue polypeptide: Small ribosomal subunit protein uS9m (390 aa).

The disordered stretch occupies residues 368-390 (PRIRERKKPGQEGARRKFTWKKR).

Belongs to the universal ribosomal protein uS9 family. In terms of assembly, component of the mitochondrial ribosome small subunit (28S) which comprises a 12S rRNA and about 30 distinct proteins.

Its subcellular location is the mitochondrion. This is Small ribosomal subunit protein uS9m (Mrps9) from Mus musculus (Mouse).